We begin with the raw amino-acid sequence, 1026 residues long: Multidrug resistance protein MdtC (1026 aa).

A run of 11 helical transmembrane segments spans residues 12-32 (VATT…FSLL), 333-353 (EVEQ…FIFL), 360-380 (LIPA…MYLC), 387-407 (LSLM…IVVL), 431-451 (VGFT…PLLL), 463-483 (FAVT…TLTP), 528-548 (WVLA…VSIP), 853-873 (LLLI…LYES), 897-917 (LFGA…IGIV), 953-973 (PIMM…LTHG), and 984-1004 (ITIV…TPVV).

This sequence belongs to the resistance-nodulation-cell division (RND) (TC 2.A.6) family. MdtC subfamily. As to quaternary structure, part of a tripartite efflux system composed of MdtA, MdtB and MdtC. MdtC forms a heteromultimer with MdtB.

Its subcellular location is the cell inner membrane. This chain is Multidrug resistance protein MdtC, found in Serratia proteamaculans (strain 568).